A 310-amino-acid polypeptide reads, in one-letter code: Olfactory receptor 2A14 (310 aa).

Over 1 to 24 the chain is Extracellular; that stretch reads MEGNKTWITDITLPRFQVGPALEI. Asparagine 4 is a glycosylation site (N-linked (GlcNAc...) asparagine). A helical transmembrane segment spans residues 25–48; the sequence is LLCGLFSAFYTLTLLGNGVIFGII. The Cytoplasmic segment spans residues 49–56; it reads CLDCKLHT. Residues 57-78 traverse the membrane as a helical segment; sequence PMYFFLSHLAIVDISYASNYVP. Residues 79–99 lie on the Extracellular side of the membrane; sequence KMLTNLMNQESTISFFPCIMQ. Cysteine 96 and cysteine 188 are joined by a disulfide. Residues 100–119 traverse the membrane as a helical segment; the sequence is TFLYLAFAHVECLILVVMSY. The Cytoplasmic segment spans residues 120-138; that stretch reads DRYADICHPLRYNSLMSWR. The chain crosses the membrane as a helical span at residues 139-157; it reads VCTVLAVASWVFSFLLALV. The Extracellular portion of the chain corresponds to 158 to 194; it reads PLVLILSLPFCGPHEINHFFCEILSVLKLACADTWLN. Residues 195 to 218 traverse the membrane as a helical segment; that stretch reads QVVIFAACVFILVGPLCLVLVSYL. Topologically, residues 219–235 are cytoplasmic; that stretch reads RILAAILRIQSGEGRRK. A helical membrane pass occupies residues 236 to 258; it reads AFSTCSSHLCVVGLFFGSAIVTY. Residues 259–271 lie on the Extracellular side of the membrane; that stretch reads MAPKSRHPEEQQK. The helical transmembrane segment at 272–291 threads the bilayer; sequence VLSLFYSLFNPMLNPLIYSL. Topologically, residues 292–310 are cytoplasmic; the sequence is RNAEVKGALRRALRKERLT.

This sequence belongs to the G-protein coupled receptor 1 family.

The protein localises to the cell membrane. Its function is as follows. Odorant receptor. This is Olfactory receptor 2A14 (OR2A14) from Homo sapiens (Human).